The primary structure comprises 528 residues: Probable serine/threonine-protein kinase DDB_G0282417 (528 aa).

Residues 49–77 show a composition bias toward low complexity; it reads NNNNNNNNNNNNNNNNNNNNNNNNNNKNN. The disordered stretch occupies residues 49–84; the sequence is NNNNNNNNNNNNNNNNNNNNNNNNNNKNNNDGDDAA. Residues 136-466 form the Protein kinase domain; it reads QQNRVLIGEG…ESLINNHQYS (331 aa). ATP-binding positions include 142–150 and Lys166; that span reads IGEGHYGKV. Asp266 acts as the Proton acceptor in catalysis.

Belongs to the protein kinase superfamily. Ser/Thr protein kinase family.

The enzyme catalyses L-seryl-[protein] + ATP = O-phospho-L-seryl-[protein] + ADP + H(+). It carries out the reaction L-threonyl-[protein] + ATP = O-phospho-L-threonyl-[protein] + ADP + H(+). This is Probable serine/threonine-protein kinase DDB_G0282417 from Dictyostelium discoideum (Social amoeba).